A 165-amino-acid chain; its full sequence is Large ribosomal subunit protein uL11 (165 aa).

At serine 38 the chain carries Phosphoserine. Lysine 40 is covalently cross-linked (Glycyl lysine isopeptide (Lys-Gly) (interchain with G-Cter in SUMO2)). Lysine 48 is covalently cross-linked (Glycyl lysine isopeptide (Lys-Gly) (interchain with G-Cter in ubiquitin)). Residue lysine 54 is modified to N6-acetyllysine. Lysine 83 participates in a covalent cross-link: Glycyl lysine isopeptide (Lys-Gly) (interchain with G-Cter in ubiquitin). At serine 165 the chain carries Phosphoserine.

The protein belongs to the universal ribosomal protein uL11 family. As to quaternary structure, component of the large ribosomal subunit. Mature ribosomes consist of a small (40S) and a large (60S) subunit. The 40S subunit contains about 33 different proteins and 1 molecule of RNA (18S). The 60S subunit contains about 49 different proteins and 3 molecules of RNA (28S, 5.8S and 5S). In terms of processing, ubiquitinated at Lys-48 and Lys-83 by RNF14 and RNF25 in response to ribosome collisions (ribosome stalling).

It is found in the cytoplasm. Component of the large ribosomal subunit. The ribosome is a large ribonucleoprotein complex responsible for the synthesis of proteins in the cell. Binds directly to 26S ribosomal RNA. This Rattus norvegicus (Rat) protein is Large ribosomal subunit protein uL11 (Rpl12).